The chain runs to 358 residues: 3-dehydroquinate synthase (358 aa).

Residues 70–75, 104–108, 128–129, K141, K150, and 168–171 each bind NAD(+); these read DGEKFK, GVVGD, TT, and CLQT. 3 residues coordinate Zn(2+): E183, H246, and H263.

Belongs to the sugar phosphate cyclases superfamily. Dehydroquinate synthase family. It depends on Co(2+) as a cofactor. Requires Zn(2+) as cofactor. NAD(+) is required as a cofactor.

The protein resides in the cytoplasm. It carries out the reaction 7-phospho-2-dehydro-3-deoxy-D-arabino-heptonate = 3-dehydroquinate + phosphate. It functions in the pathway metabolic intermediate biosynthesis; chorismate biosynthesis; chorismate from D-erythrose 4-phosphate and phosphoenolpyruvate: step 2/7. In terms of biological role, catalyzes the conversion of 3-deoxy-D-arabino-heptulosonate 7-phosphate (DAHP) to dehydroquinate (DHQ). The protein is 3-dehydroquinate synthase of Shewanella frigidimarina (strain NCIMB 400).